The chain runs to 331 residues: Pantothenate kinase (331 aa).

109–116 (GSVAVGKS) serves as a coordination point for ATP.

The protein belongs to the prokaryotic pantothenate kinase family.

Its subcellular location is the cytoplasm. It carries out the reaction (R)-pantothenate + ATP = (R)-4'-phosphopantothenate + ADP + H(+). Its pathway is cofactor biosynthesis; coenzyme A biosynthesis; CoA from (R)-pantothenate: step 1/5. The chain is Pantothenate kinase from Rhizobium etli (strain CIAT 652).